The primary structure comprises 248 residues: Cyclin-Q (248 aa).

At Met1 the chain carries N-acetylmethionine. A compositionally biased stretch (gly residues) spans 1–12; it reads MEAPEGGGGGPA. A disordered region spans residues 1–21; it reads MEAPEGGGGGPAARGPEGQPA.

This sequence belongs to the cyclin family. Cyclin-like FAM58 subfamily. Associates with CDK10 to promote its kinase activity. Interacts with SALL1.

Activating cyclin for the cyclin-associated kinase CDK10. This Homo sapiens (Human) protein is Cyclin-Q.